The sequence spans 254 residues: Type III pantothenate kinase (254 aa).

Position 6 to 13 (6 to 13) interacts with ATP; it reads DLGNSAIK. Substrate is bound by residues Y99 and 106 to 109; that span reads GVDR. D108 functions as the Proton acceptor in the catalytic mechanism. D128 is a K(+) binding site. An ATP-binding site is contributed by T131. T182 lines the substrate pocket.

This sequence belongs to the type III pantothenate kinase family. As to quaternary structure, homodimer. Requires NH4(+) as cofactor. K(+) serves as cofactor.

Its subcellular location is the cytoplasm. The enzyme catalyses (R)-pantothenate + ATP = (R)-4'-phosphopantothenate + ADP + H(+). The protein operates within cofactor biosynthesis; coenzyme A biosynthesis; CoA from (R)-pantothenate: step 1/5. Its function is as follows. Catalyzes the phosphorylation of pantothenate (Pan), the first step in CoA biosynthesis. The sequence is that of Type III pantothenate kinase from Halorhodospira halophila (strain DSM 244 / SL1) (Ectothiorhodospira halophila (strain DSM 244 / SL1)).